Here is a 499-residue protein sequence, read N- to C-terminus: MAMAEGERTECAEPPRDEPPAEGTLKRAEELKTQANDYFKAKDYENAIKFYSQAIELNPSNAIYYGNRSLAYLRTECYGYALGDATRAIELDKKYIKGYYRRAASNMALGKFRAALRDYETVVKVKPNDKDAKMKYQECSKIVKQKAFERAIAGDEHRRSVVDSLDIESMTIEDEYSGPKLEDGKVTITFMKDLMQWYKDQKKLHRKCAYQILVQVKEVLCKLSTLVETTLKETEKITVCGDTHGQFYDLLNIFELNGLPSETNPYIFNGDFVDRGSFSVEVILTLFGFKLLYPDHFHLLRGNHETDNMNQIYGFEGEVKAKYTAQMYELFSEVFEWLPLAQCINGKVLIMHGGLFSEDGVTLDDIRKIERNRQPPDSGPMCDLLWSDPQPQNGRSVSKRGVSCQFGPDVTKAFLEENQLDYIIRSHEVKAEGYEVAHGGRCVTVFSAPNYCDQMGNKASYIHLQGSDLRPQFHQFTAVPHPNVKPMAYANTLLQLGMM.

The disordered stretch occupies residues 1 to 23 (MAMAEGERTECAEPPRDEPPAEG). N-acetylalanine is present on Ala-2. TPR repeat units follow at residues 28-61 (AEEL…NPSN), 62-95 (AIYY…DKKY), and 96-129 (IKGY…KPND). Residues 200–499 (DQKKLHRKCA…ANTLLQLGMM (300 aa)) are catalytic. Mg(2+) contacts are provided by Asp-242, His-244, and Asp-271. Position 244 (His-244) interacts with substrate. Substrate contacts are provided by residues Arg-275 and 303–304 (NH). Residue Asn-303 participates in Mg(2+) binding. The Proton donor/acceptor role is filled by His-304. Position 352 (His-352) interacts with Mg(2+). 2 residues coordinate substrate: Arg-400 and His-427. His-427 is a binding site for Mg(2+). The tract at residues 495–499 (QLGMM) is required for autoinhibition.

Belongs to the PPP phosphatase family. PP-5 (PP-T) subfamily. In terms of assembly, probably forms a complex composed of chaperones HSP90 and HSP70, co-chaperones STIP1/HOP, CDC37, PPP5C, PTGES3/p23, TSC1 and client protein TSC2. Probably forms a complex composed of chaperones HSP90 and HSP70, co-chaperones CDC37, PPP5C, TSC1 and client protein TSC2, CDK4, AKT, RAF1 and NR3C1; this complex does not contain co-chaperones STIP1/HOP and PTGES3/p23. Part of a complex with HSP90/HSP90AA1 and steroid receptors. Interacts (via TPR repeats) with HSP90AA1 (via TPR repeat-binding motif) or HSPA1A/HSPA1B; the interaction is direct and activates the phosphatase activity. Dissociates from HSPA1A/HSPA1B and HSP90AA1 in response to arachidonic acid. Interacts with CPNE1 (via VWFA domain). Interacts with CDC16, CDC27. Interacts with KLHDC10 (via the 6 Kelch repeats); inhibits the phosphatase activity on MAP3K5. Interacts with ATM and ATR; both interactions are induced by DNA damage and enhance ATM and ATR kinase activity. Interacts with RAD17; reduced by DNA damage. Interacts with nuclear receptors such as NR3C1/GCR and PPARG (activated by agonist); regulates their transactivation activities. Interacts (via TPR repeats) with S100 proteins S100A1, S100A2, S100A6, S100B and S100P; the interactions are calcium-dependent, strongly activate PPP5C phosphatase activity and compete with HSP90AA1 and MAP3K5 interactions. Interacts with SMAD2 and SMAD3 but not with SMAD1; decreases SMAD3 phosphorylation and protein levels. Interacts (via TPR repeats) with CRY1 and CRY2; the interaction with CRY2 down-regulates the phosphatase activity on CSNK1E. Interacts (via TPR repeats) with the active form of RAC1, GNA12 or GNA13; these interactions activate the phosphatase activity and translocate PPP5C to the cell membrane. Interacts with FLCN. The cofactor is Mg(2+). Mn(2+) is required as a cofactor. Activated by at least two different proteolytic cleavages producing a 56 kDa and a 50 kDa form. Predominantly found in brain and, in lower levels, in testis, but was nearly undetectable in spleen, lung, skeletal muscle, kidney and liver.

It is found in the nucleus. The protein resides in the cytoplasm. The protein localises to the cell membrane. The enzyme catalyses O-phospho-L-seryl-[protein] + H2O = L-seryl-[protein] + phosphate. The catalysed reaction is O-phospho-L-threonyl-[protein] + H2O = L-threonyl-[protein] + phosphate. Its activity is regulated as follows. Autoinhibited. In the autoinhibited state, the TPR domain interacts with the catalytic region and prevents substrate access to the catalytic pocket. Allosterically activated by various polyunsaturated fatty acids, free long-chain fatty-acids and long-chain fatty acyl-CoA esters, arachidonic acid being the most effective activator. HSP90A and probably RAC1, GNA12 and GNA13 can also release the autoinhibition by the TPR repeat. Activation by RAC1, GNA12 and GNA13 is synergistic with the one produced by fatty acids binding. Inhibited by okadaic acid. In terms of biological role, serine/threonine-protein phosphatase that dephosphorylates a myriad of proteins involved in different signaling pathways including the kinases CSNK1E, ASK1/MAP3K5, PRKDC and RAF1, the nuclear receptors NR3C1, PPARG, ESR1 and ESR2, SMAD proteins and TAU/MAPT. Implicated in wide ranging cellular processes, including apoptosis, differentiation, DNA damage response, cell survival, regulation of ion channels or circadian rhythms, in response to steroid and thyroid hormones, calcium, fatty acids, TGF-beta as well as oxidative and genotoxic stresses. Participates in the control of DNA damage response mechanisms such as checkpoint activation and DNA damage repair through, for instance, the regulation ATM/ATR-signaling and dephosphorylation of PRKDC and TP53BP1. Inhibits ASK1/MAP3K5-mediated apoptosis induced by oxidative stress. Plays a positive role in adipogenesis, mainly through the dephosphorylation and activation of PPARG transactivation function. Also dephosphorylates and inhibits the anti-adipogenic effect of NR3C1. Regulates the circadian rhythms, through the dephosphorylation and activation of CSNK1E. May modulate TGF-beta signaling pathway by the regulation of SMAD3 phosphorylation and protein expression levels. Dephosphorylates and may play a role in the regulation of TAU/MAPT. Through their dephosphorylation, may play a role in the regulation of ions channels such as KCNH2. Dephosphorylate FNIP1, disrupting interaction with HSP90AA1/Hsp90. The sequence is that of Serine/threonine-protein phosphatase 5 (Ppp5c) from Rattus norvegicus (Rat).